We begin with the raw amino-acid sequence, 87 residues long: Defensin-like protein 100 (87 aa).

A signal peptide spans 1 to 29; the sequence is MRSLRLRTVVVATIVVCLSVLLSPTEVDG. 4 disulfide bridges follow: Cys31–Cys79, Cys38–Cys64, Cys44–Cys76, and Cys48–Cys78.

It belongs to the DEFL family.

It localises to the secreted. This Arabidopsis thaliana (Mouse-ear cress) protein is Defensin-like protein 100.